A 408-amino-acid polypeptide reads, in one-letter code: Multidrug resistance protein MdtG (408 aa).

Helical transmembrane passes span 16 to 36, 58 to 78, 92 to 112, 115 to 135, 146 to 166, 173 to 193, 224 to 244, 256 to 276, 290 to 310, 319 to 339, and 378 to 398; these read LIVAWLGCFLTGAAFSLVMPF, IVFSITFLFSAIASPFWGGLA, LGMGIVMVLMGLAQNIWQFLI, ALLGLLGGFVPNANALIATQV, TLSTGGVSGALLGPMAGGLLA, PVFFITASVLILCFFVTLFCI, LFVTTLIIQVATGSIAPILTL, VAFISGMIASVPGVAALLSAP, ILITALIFSVLLLIPMSYVQT, FLLGAADGALLPAVQTLLVYN, and AVFLVTAGVVLFNAVYSWNSL.

The protein belongs to the major facilitator superfamily. DHA1 family. MdtG (TC 2.A.1.2.20) subfamily.

It is found in the cell inner membrane. Confers resistance to fosfomycin and deoxycholate. The protein is Multidrug resistance protein MdtG of Escherichia coli O7:K1 (strain IAI39 / ExPEC).